Reading from the N-terminus, the 170-residue chain is Alpha-crystallin A chain (170 aa).

Position 1 is an N-acetylmethionine (Met1). The required for complex formation with BFSP1 and BFSP2 stretch occupies residues 1–63 (MDVTIQQPWF…RTALDSGISE (63 aa)). Gln6 is modified (deamidated glutamine; partial). Ser45 carries the post-translational modification Phosphoserine. Gln50 bears the Deamidated glutamine; partial mark. The 110-residue stretch at 52–161 (LFRTALDSGI…SERPIPVSRE (110 aa)) folds into the sHSP domain. Lys70 and Lys99 each carry N6-acetyllysine. His100 provides a ligand contact to Zn(2+). The residue at position 101 (Asn101) is a Deamidated asparagine; partial. Glu102, His107, and His151 together coordinate Zn(2+). The tract at residues 144–170 (PKIVDPSHSERPIPVSREEKPSSAPSS) is disordered. The span at 148–164 (DPSHSERPIPVSREEKP) shows a compositional bias: basic and acidic residues. Residue Ser159 is glycosylated (O-linked (GlcNAc) serine).

This sequence belongs to the small heat shock protein (HSP20) family. As to quaternary structure, heteromer composed of three CRYAA and one CRYAB subunits. Inter-subunit bridging via zinc ions enhances stability, which is crucial as there is no protein turn over in the lens. Can also form homodimers and homotetramers (dimers of dimers) which serve as the building blocks of homooligomers. Within homooligomers, the zinc-binding motif is created from residues of 3 different molecules. His-100 and Glu-102 from one molecule are ligands of the zinc ion, and His-107 and His-151 residues from additional molecules complete the site with tetrahedral coordination geometry. Part of a complex required for lens intermediate filament formation composed of BFSP1, BFSP2 and CRYAA. Acetylation at Lys-70 may increase chaperone activity. In terms of processing, undergoes age-dependent proteolytical cleavage at the C-terminus.

It localises to the cytoplasm. The protein resides in the nucleus. Contributes to the transparency and refractive index of the lens. Acts as a chaperone, preventing aggregation of various proteins under a wide range of stress conditions. Required for the correct formation of lens intermediate filaments as part of a complex composed of BFSP1, BFSP2 and CRYAA. In Bradypus variegatus (Brown-throated three-fingered sloth), this protein is Alpha-crystallin A chain (CRYAA).